A 544-amino-acid chain; its full sequence is (E,E)-germacrene B synthase (544 aa).

Residues Asp296, Asp300, and Glu449 each contribute to the Mg(2+) site. The DDXXD motif motif lies at 296–300 (DDTFD).

This sequence belongs to the terpene synthase family. Mg(2+) is required as a cofactor. It depends on Mn(2+) as a cofactor.

The protein resides in the cytoplasm. The catalysed reaction is (2E,6E)-farnesyl diphosphate = (1E,4E)-germacrene B + diphosphate. It participates in secondary metabolite biosynthesis; terpenoid biosynthesis. In terms of biological role, involved in the biosynthesis of germacrene B. The chain is (E,E)-germacrene B synthase (SSTLH1) from Solanum habrochaites (Wild tomato).